Reading from the N-terminus, the 136-residue chain is Small ribosomal subunit protein uS8 (136 aa).

It belongs to the universal ribosomal protein uS8 family. Part of the 30S ribosomal subunit. Contacts proteins S5 and S12.

One of the primary rRNA binding proteins, it binds directly to 16S rRNA central domain where it helps coordinate assembly of the platform of the 30S subunit. The polypeptide is Small ribosomal subunit protein uS8 (Frankia alni (strain DSM 45986 / CECT 9034 / ACN14a)).